The following is a 238-amino-acid chain: Ribonuclease PH (238 aa).

Phosphate-binding positions include arginine 87 and 125 to 127; that span reads GTR.

The protein belongs to the RNase PH family. In terms of assembly, homohexameric ring arranged as a trimer of dimers.

The enzyme catalyses tRNA(n+1) + phosphate = tRNA(n) + a ribonucleoside 5'-diphosphate. Its function is as follows. Phosphorolytic 3'-5' exoribonuclease that plays an important role in tRNA 3'-end maturation. Removes nucleotide residues following the 3'-CCA terminus of tRNAs; can also add nucleotides to the ends of RNA molecules by using nucleoside diphosphates as substrates, but this may not be physiologically important. Probably plays a role in initiation of 16S rRNA degradation (leading to ribosome degradation) during starvation. The sequence is that of Ribonuclease PH from Synechococcus elongatus (strain ATCC 33912 / PCC 7942 / FACHB-805) (Anacystis nidulans R2).